The following is a 92-amino-acid chain: Acylphosphatase (92 aa).

One can recognise an Acylphosphatase-like domain in the interval 5–92 (CIAAYVYGVV…ADFQGFSIRY (88 aa)). Residues arginine 20 and asparagine 38 contribute to the active site.

This sequence belongs to the acylphosphatase family.

It catalyses the reaction an acyl phosphate + H2O = a carboxylate + phosphate + H(+). This Serratia proteamaculans (strain 568) protein is Acylphosphatase (acyP).